The sequence spans 540 residues: 2-isopropylmalate synthase (540 aa).

The 264-residue stretch at 8–271 (VLIFDTTLRD…NPFFGRESDS (264 aa)) folds into the Pyruvate carboxyltransferase domain. Residues Asp-17, His-208, His-210, and Asn-244 each contribute to the Mn(2+) site. A regulatory domain region spans residues 408 to 540 (QLRLVQVSCG…AVLADRRPGI (133 aa)).

The protein belongs to the alpha-IPM synthase/homocitrate synthase family. LeuA type 1 subfamily. As to quaternary structure, homodimer. It depends on Mn(2+) as a cofactor.

The protein localises to the cytoplasm. The enzyme catalyses 3-methyl-2-oxobutanoate + acetyl-CoA + H2O = (2S)-2-isopropylmalate + CoA + H(+). It participates in amino-acid biosynthesis; L-leucine biosynthesis; L-leucine from 3-methyl-2-oxobutanoate: step 1/4. In terms of biological role, catalyzes the condensation of the acetyl group of acetyl-CoA with 3-methyl-2-oxobutanoate (2-ketoisovalerate) to form 3-carboxy-3-hydroxy-4-methylpentanoate (2-isopropylmalate). The chain is 2-isopropylmalate synthase from Prochlorococcus marinus (strain MIT 9303).